A 597-amino-acid polypeptide reads, in one-letter code: Glypican-3 (597 aa).

Residues 1-24 (MAGTVRTACLLVAMLLGLGCLGQA) form the signal peptide. Residue Gln25 is modified to Pyrrolidone carboxylic acid. 7 cysteine pairs are disulfide-bonded: Cys34–Cys71, Cys64–Cys261, Cys72–Cys264, Cys196–Cys348, Cys251–Cys284, Cys273–Cys421, and Cys277–Cys409. Residues Asn123 and Asn240 are each glycosylated (N-linked (GlcNAc...) asparagine). The residue at position 351 (Ser351) is a Phosphoserine. A glycan (N-linked (GlcNAc...) asparagine) is linked at Asn417. O-linked (Xyl...) (glycosaminoglycan) serine glycosylation is found at Ser494 and Ser508. The interval 533–553 (DAPGNKQHGNQKDNEITTSHS) is disordered.

The protein belongs to the glypican family. Heterodimer; disulfide-linked. Cleavage by a furin-like convertase results in production of alpha and beta chains which form a disulfide-linked heterodimer. Interacts with DPP4. Interacts with FGF2. Interacts with WNT5A. Also interacts with WNT3A and WNT7B. Interacts with hedgehog protein SHH; the heparan sulfate chains are not required for the interaction. Also interacts with hedgehog protein IHH. Interacts with CD81. Interacts with Wnt receptors FZD4, FZD7 and FZD8; the heparan sulfate chains are required for the interaction. Post-translationally, O-glycosylated; contains heparan sulfate and/or chondroitin sulfate. In terms of processing, cleaved intracellularly by a furin-like convertase to generate 2 subunits, alpha and beta, which remain associated through disulfide bonds and are associated with the cell surface via the GPI-anchor. This processing is essential for its role in inhibition of hedgehog signaling. A second proteolytic event may result in cleavage of the protein on the cell surface, separating it from the GPI-anchor and leading to its shedding from the cell surface.

Its subcellular location is the cell membrane. Its function is as follows. Cell surface proteoglycan. Negatively regulates the hedgehog signaling pathway when attached via the GPI-anchor to the cell surface by competing with the hedgehog receptor PTC1 for binding to hedgehog proteins. Binding to the hedgehog protein SHH triggers internalization of the complex by endocytosis and its subsequent lysosomal degradation. Positively regulates the canonical Wnt signaling pathway by binding to the Wnt receptor Frizzled and stimulating the binding of the Frizzled receptor to Wnt ligands. Positively regulates the non-canonical Wnt signaling pathway. Binds to CD81 which decreases the availability of free CD81 for binding to the transcriptional repressor HHEX, resulting in nuclear translocation of HHEX and transcriptional repression. Inhibits the dipeptidyl peptidase activity of DPP4. Plays a role in limb patterning and skeletal development by controlling the cellular response to BMP4. Modulates the effects of growth factors BMP2, BMP7 and FGF7 on renal branching morphogenesis. Required for coronary vascular development. Plays a role in regulating cell movements during gastrulation. The chain is Glypican-3 (Gpc3) from Rattus norvegicus (Rat).